The chain runs to 398 residues: Selenide, water dikinase (398 aa).

The disordered stretch occupies residues 1–21 (MSHKRPQSSAGESNGAVDLKT). C46 is a catalytic residue. ATP is bound by residues K49, 72–74 (GMD), D97, D120, and 171–174 (GGQT). D74 is a Mg(2+) binding site. D120 is a binding site for Mg(2+). A Mg(2+)-binding site is contributed by D278.

This sequence belongs to the selenophosphate synthase 1 family. Class I subfamily. Homodimer. Requires Mg(2+) as cofactor.

It carries out the reaction hydrogenselenide + ATP + H2O = selenophosphate + AMP + phosphate + 2 H(+). Synthesizes selenophosphate from selenide and ATP. This Leishmania major protein is Selenide, water dikinase.